The chain runs to 1086 residues: Fused isobutyryl-CoA mutase (1086 aa).

Residues 10–140 (HVRFVTASSL…QGMINVMLEE (131 aa)) form the B12-binding domain. Residue His-23 participates in adenosylcob(III)alamin binding. The tract at residues 153-407 (LERLPSGDVQ…FVALVDTINK (255 aa)) is GTPase chaperone MeaI. 210–215 (GAGKSS) provides a ligand contact to GTP. Residues Ser-214, Val-238, Asp-239, and Asp-252 each contribute to the Mg(2+) site. Arg-255 serves as a coordination point for GTP. Mg(2+)-binding residues include Glu-300 and Thr-301. 347-350 (NKFE) is a GTP binding site. Positions 408-570 (KAGTNWKTSL…YKENVPGSFP (163 aa)) are linker. Substrate is bound by residues Phe-578, Arg-613, Arg-719, Tyr-763, Ser-812, Arg-847, and Lys-852. The GTP site is built by Glu-964 and Asn-1085.

This sequence belongs to the IcmF family. As to quaternary structure, homodimer. Adenosylcob(III)alamin serves as cofactor. The cofactor is Mg(2+).

It carries out the reaction 2-methylpropanoyl-CoA = butanoyl-CoA. The catalysed reaction is 3-methylbutanoyl-CoA = 2,2-dimethylpropanoyl-CoA. The enzyme catalyses GTP + H2O = GDP + phosphate + H(+). Functionally, catalyzes the reversible interconversion of isobutyryl-CoA and n-butyryl-CoA, and to a lesser extent, of pivalyl-CoA and isovaleryl-CoA, using radical chemistry. Also exhibits GTPase activity, associated with its G-protein domain (MeaI) that functions as a chaperone that assists cofactor delivery and proper holo-enzyme assembly. Also displays ATPase activity. Is not able to convert 3-hydroxybutyryl-CoA to 2-hydroxyisobutyryl-CoA. Does not exhibit methylmalonyl-CoA mutase (MCM) activity. This is Fused isobutyryl-CoA mutase from Geobacillus kaustophilus (strain HTA426).